The sequence spans 955 residues: Glycine dehydrogenase (decarboxylating) (955 aa).

K705 carries the N6-(pyridoxal phosphate)lysine modification.

It belongs to the GcvP family. As to quaternary structure, the glycine cleavage system is composed of four proteins: P, T, L and H. Pyridoxal 5'-phosphate serves as cofactor.

The enzyme catalyses N(6)-[(R)-lipoyl]-L-lysyl-[glycine-cleavage complex H protein] + glycine + H(+) = N(6)-[(R)-S(8)-aminomethyldihydrolipoyl]-L-lysyl-[glycine-cleavage complex H protein] + CO2. Its function is as follows. The glycine cleavage system catalyzes the degradation of glycine. The P protein binds the alpha-amino group of glycine through its pyridoxal phosphate cofactor; CO(2) is released and the remaining methylamine moiety is then transferred to the lipoamide cofactor of the H protein. This is Glycine dehydrogenase (decarboxylating) from Aliivibrio salmonicida (strain LFI1238) (Vibrio salmonicida (strain LFI1238)).